The following is a 230-amino-acid chain: Probable methylthioribulose-1-phosphate dehydratase (230 aa).

C87 is a binding site for substrate. 2 residues coordinate Zn(2+): H105 and H107. E129 serves as the catalytic Proton donor/acceptor. Residue H185 coordinates Zn(2+).

The protein belongs to the aldolase class II family. MtnB subfamily. The cofactor is Zn(2+).

It localises to the cytoplasm. It catalyses the reaction 5-(methylsulfanyl)-D-ribulose 1-phosphate = 5-methylsulfanyl-2,3-dioxopentyl phosphate + H2O. Its pathway is amino-acid biosynthesis; L-methionine biosynthesis via salvage pathway; L-methionine from S-methyl-5-thio-alpha-D-ribose 1-phosphate: step 2/6. Its function is as follows. Catalyzes the dehydration of methylthioribulose-1-phosphate (MTRu-1-P) into 2,3-diketo-5-methylthiopentyl-1-phosphate (DK-MTP-1-P). The sequence is that of Probable methylthioribulose-1-phosphate dehydratase from Drosophila virilis (Fruit fly).